Consider the following 455-residue polypeptide: UDP-N-acetylmuramoylalanine--D-glutamate ligase (455 aa).

Glycine 117–threonine 123 provides a ligand contact to ATP.

It belongs to the MurCDEF family.

It localises to the cytoplasm. The catalysed reaction is UDP-N-acetyl-alpha-D-muramoyl-L-alanine + D-glutamate + ATP = UDP-N-acetyl-alpha-D-muramoyl-L-alanyl-D-glutamate + ADP + phosphate + H(+). The protein operates within cell wall biogenesis; peptidoglycan biosynthesis. Functionally, cell wall formation. Catalyzes the addition of glutamate to the nucleotide precursor UDP-N-acetylmuramoyl-L-alanine (UMA). The polypeptide is UDP-N-acetylmuramoylalanine--D-glutamate ligase (Alkaliphilus metalliredigens (strain QYMF)).